A 262-amino-acid chain; its full sequence is VPS74-like protein DDB_G0288371 (262 aa).

It belongs to the GOLPH3/VPS74 family.

It is found in the golgi apparatus. The protein localises to the golgi stack membrane. In terms of biological role, phosphatidylinositol-4-phosphate-binding protein that links Golgi membranes to the cytoskeleton and may participate in the tensile force required for vesicle budding from the Golgi. Thereby, may play a role in Golgi membrane trafficking. May also bind to the coatomer to regulate Golgi membrane trafficking. May play a role in anterograde transport from the Golgi to the plasma membrane and regulate secretion. May be involved in vacuolar protein sorting. This chain is VPS74-like protein DDB_G0288371, found in Dictyostelium discoideum (Social amoeba).